The following is a 204-amino-acid chain: ATP-dependent Clp protease proteolytic subunit (204 aa).

Serine 102 acts as the Nucleophile in catalysis. Histidine 127 is an active-site residue.

Belongs to the peptidase S14 family. Fourteen ClpP subunits assemble into 2 heptameric rings which stack back to back to give a disk-like structure with a central cavity, resembling the structure of eukaryotic proteasomes.

The protein localises to the cytoplasm. The catalysed reaction is Hydrolysis of proteins to small peptides in the presence of ATP and magnesium. alpha-casein is the usual test substrate. In the absence of ATP, only oligopeptides shorter than five residues are hydrolyzed (such as succinyl-Leu-Tyr-|-NHMec, and Leu-Tyr-Leu-|-Tyr-Trp, in which cleavage of the -Tyr-|-Leu- and -Tyr-|-Trp bonds also occurs).. Its function is as follows. Cleaves peptides in various proteins in a process that requires ATP hydrolysis. Has a chymotrypsin-like activity. Plays a major role in the degradation of misfolded proteins. The sequence is that of ATP-dependent Clp protease proteolytic subunit from Neisseria meningitidis serogroup C (strain 053442).